Reading from the N-terminus, the 476-residue chain is 1-aminocyclopropane-1-carboxylate synthase 4 (476 aa).

Lys-282 carries the post-translational modification N6-(pyridoxal phosphate)lysine.

Belongs to the class-I pyridoxal-phosphate-dependent aminotransferase family. In terms of assembly, homodimer. Pyridoxal 5'-phosphate is required as a cofactor.

It carries out the reaction S-adenosyl-L-methionine = 1-aminocyclopropane-1-carboxylate + S-methyl-5'-thioadenosine + H(+). It participates in alkene biosynthesis; ethylene biosynthesis via S-adenosyl-L-methionine; ethylene from S-adenosyl-L-methionine: step 1/2. Functionally, catalyzes the formation of 1-aminocyclopropane-1-carboxylate, a direct precursor of ethylene in higher plants. This is 1-aminocyclopropane-1-carboxylate synthase 4 (ACS4) from Solanum lycopersicum (Tomato).